The following is a 179-amino-acid chain: Large ribosomal subunit protein uL6 (179 aa).

This sequence belongs to the universal ribosomal protein uL6 family. As to quaternary structure, part of the 50S ribosomal subunit.

In terms of biological role, this protein binds to the 23S rRNA, and is important in its secondary structure. It is located near the subunit interface in the base of the L7/L12 stalk, and near the tRNA binding site of the peptidyltransferase center. In Synechococcus sp. (strain WH7803), this protein is Large ribosomal subunit protein uL6.